The chain runs to 122 residues: MICOS complex subunit MIC13 homolog QIL1 (122 aa).

A helical membrane pass occupies residues 9–25 (GGLVAATVYYTQKVGIW).

This sequence belongs to the MICOS complex subunit Mic13 family. Component of the mitochondrial contact site and cristae organizing system (MICOS) complex.

It is found in the mitochondrion inner membrane. In terms of biological role, component of the MICOS complex, a large protein complex of the mitochondrial inner membrane that plays crucial roles in the maintenance of crista junctions, inner membrane architecture, and formation of contact sites to the outer membrane. This chain is MICOS complex subunit MIC13 homolog QIL1, found in Drosophila melanogaster (Fruit fly).